The primary structure comprises 92 residues: Small ribosomal subunit protein uS19c (92 aa).

Belongs to the universal ribosomal protein uS19 family.

It localises to the plastid. The protein resides in the chloroplast. Its function is as follows. Protein S19 forms a complex with S13 that binds strongly to the 16S ribosomal RNA. In Chloranthus spicatus (Chulantree), this protein is Small ribosomal subunit protein uS19c.